The primary structure comprises 543 residues: Chaperonin GroEL (543 aa).

ATP is bound by residues 29–32 (TLGP), 86–90 (DGTTT), Gly413, 478–480 (NAA), and Asp494.

Belongs to the chaperonin (HSP60) family. As to quaternary structure, forms a cylinder of 14 subunits composed of two heptameric rings stacked back-to-back. Interacts with the co-chaperonin GroES.

It localises to the cytoplasm. The enzyme catalyses ATP + H2O + a folded polypeptide = ADP + phosphate + an unfolded polypeptide.. Functionally, together with its co-chaperonin GroES, plays an essential role in assisting protein folding. The GroEL-GroES system forms a nano-cage that allows encapsulation of the non-native substrate proteins and provides a physical environment optimized to promote and accelerate protein folding. This is Chaperonin GroEL from Lactobacillus gasseri (strain ATCC 33323 / DSM 20243 / BCRC 14619 / CIP 102991 / JCM 1131 / KCTC 3163 / NCIMB 11718 / NCTC 13722 / AM63).